The sequence spans 183 residues: Adenine phosphoribosyltransferase (183 aa).

The protein belongs to the purine/pyrimidine phosphoribosyltransferase family. As to quaternary structure, homodimer.

Its subcellular location is the cytoplasm. The catalysed reaction is AMP + diphosphate = 5-phospho-alpha-D-ribose 1-diphosphate + adenine. The protein operates within purine metabolism; AMP biosynthesis via salvage pathway; AMP from adenine: step 1/1. Catalyzes a salvage reaction resulting in the formation of AMP, that is energically less costly than de novo synthesis. The protein is Adenine phosphoribosyltransferase of Shewanella sp. (strain MR-7).